The primary structure comprises 486 residues: Cobyric acid synthase (486 aa).

Residues 248–435 (VLNVVVPVLP…LHGLFESPAA (188 aa)) enclose the GATase cobBQ-type domain. Cys329 functions as the Nucleophile in the catalytic mechanism. His427 is an active-site residue.

This sequence belongs to the CobB/CobQ family. CobQ subfamily.

It functions in the pathway cofactor biosynthesis; adenosylcobalamin biosynthesis. In terms of biological role, catalyzes amidations at positions B, D, E, and G on adenosylcobyrinic A,C-diamide. NH(2) groups are provided by glutamine, and one molecule of ATP is hydrogenolyzed for each amidation. This Pseudomonas syringae pv. tomato (strain ATCC BAA-871 / DC3000) protein is Cobyric acid synthase.